Consider the following 888-residue polypeptide: uncharacterized protein (888 aa).

The N-terminal stretch at 1 to 20 is a signal peptide; the sequence is MKILKSLVLLVLFIVMPAKA. 6 consecutive transmembrane segments (helical) span residues 513-533, 565-585, 611-631, 649-669, 682-702, and 781-801; these read IVKAALTLYVIIFGLMFVAGA, TYFFSVFTDGINFFITNVVGA, LLFIELLQIHNGLAFIAIITI, VIAFIGITVMISLAPFFIILM, ISTLLSYVVQPTILLIFFLLI, and LLFYSYCLMSYGLVTFVNIVV.

The protein belongs to the TrbL/VirB6 family.

Its subcellular location is the cell membrane. This is an uncharacterized protein from Rickettsia prowazekii (strain Madrid E).